We begin with the raw amino-acid sequence, 365 residues long: Ribosomal RNA large subunit methyltransferase M (365 aa).

S-adenosyl-L-methionine is bound by residues S188, C221–G224, D240, D260, and D277. K306 acts as the Proton acceptor in catalysis.

This sequence belongs to the class I-like SAM-binding methyltransferase superfamily. RNA methyltransferase RlmE family. RlmM subfamily. As to quaternary structure, monomer.

It is found in the cytoplasm. The catalysed reaction is cytidine(2498) in 23S rRNA + S-adenosyl-L-methionine = 2'-O-methylcytidine(2498) in 23S rRNA + S-adenosyl-L-homocysteine + H(+). Its function is as follows. Catalyzes the 2'-O-methylation at nucleotide C2498 in 23S rRNA. The protein is Ribosomal RNA large subunit methyltransferase M of Proteus mirabilis (strain HI4320).